The primary structure comprises 68 residues: Large ribosomal subunit protein uL29 (68 aa).

Belongs to the universal ribosomal protein uL29 family.

The chain is Large ribosomal subunit protein uL29 from Nitrobacter winogradskyi (strain ATCC 25391 / DSM 10237 / CIP 104748 / NCIMB 11846 / Nb-255).